We begin with the raw amino-acid sequence, 677 residues long: Methionine--tRNA ligase (677 aa).

The 'HIGH' region motif lies at Pro15–His25. Residues Cys146, Cys149, Cys159, and Cys162 each coordinate Zn(2+). A 'KMSKS' region motif is present at residues Lys333–Ser337. Lys336 contributes to the ATP binding site. In terms of domain architecture, tRNA-binding spans Asp575–Lys677.

This sequence belongs to the class-I aminoacyl-tRNA synthetase family. MetG type 1 subfamily. As to quaternary structure, homodimer. The cofactor is Zn(2+).

Its subcellular location is the cytoplasm. The enzyme catalyses tRNA(Met) + L-methionine + ATP = L-methionyl-tRNA(Met) + AMP + diphosphate. In terms of biological role, is required not only for elongation of protein synthesis but also for the initiation of all mRNA translation through initiator tRNA(fMet) aminoacylation. The sequence is that of Methionine--tRNA ligase from Salmonella arizonae (strain ATCC BAA-731 / CDC346-86 / RSK2980).